Here is a 312-residue protein sequence, read N- to C-terminus: Isochorismatase (312 aa).

A Carrier domain is found at V229–S302. Residue S263 is modified to O-(pantetheine 4'-phosphoryl)serine.

Belongs to the isochorismatase family.

It carries out the reaction isochorismate + H2O = (2S,3S)-2,3-dihydroxy-2,3-dihydrobenzoate + pyruvate. Its pathway is siderophore biosynthesis; bacillibactin biosynthesis. This Bacillus subtilis (strain 168) protein is Isochorismatase (dhbB).